The primary structure comprises 416 residues: Glutamyl-tRNA reductase (416 aa).

Residues 49 to 52, Ser-105, 110 to 112, and Gln-116 each bind substrate; these read TCNR and EPQ. Residue Cys-50 is the Nucleophile of the active site. 185 to 190 lines the NADP(+) pocket; sequence GAGETI.

It belongs to the glutamyl-tRNA reductase family. In terms of assembly, homodimer.

The enzyme catalyses (S)-4-amino-5-oxopentanoate + tRNA(Glu) + NADP(+) = L-glutamyl-tRNA(Glu) + NADPH + H(+). It functions in the pathway porphyrin-containing compound metabolism; protoporphyrin-IX biosynthesis; 5-aminolevulinate from L-glutamyl-tRNA(Glu): step 1/2. Its function is as follows. Catalyzes the NADPH-dependent reduction of glutamyl-tRNA(Glu) to glutamate 1-semialdehyde (GSA). The sequence is that of Glutamyl-tRNA reductase from Shewanella baltica (strain OS223).